We begin with the raw amino-acid sequence, 325 residues long: MALETNTHRSYSIIPCFIFVELVIMAGTVLLSYYFECTDTFQVHIQGFFCQDGNLMKPYPGTEDESFISPLVLYCVLAATPTAIIFIGEVTTYFIKSTRENLIVQEKMILTGECCYLNPLFRRIIRFIGVFAFGLFATDIFVNAGQVVTGNLTPYFLTVCKPNYTASDCLIYHQFINSANICTGDPEVIEKARRSFPSKHAALSIYSALYATMYITSTIKTKSSRLAKPVLCLGTLCCAFLTGLNRVSEYRNHCVDVIGGFILGTAIALFLGLCVVHNFKGLYGAQCKPKPEDPRGVPLMAFPRVESPLETLSAQNHSSSMTEVT.

Transmembrane regions (helical) follow at residues 11–31 (YSIIPCFIFVELVIMAGTVLL), 67–87 (FISPLVLYCVLAATPTAIIFI), and 127–147 (FIGVFAFGLFATDIFVNAGQV). Asparagine 163 is a glycosylation site (N-linked (GlcNAc...) asparagine). 3 helical membrane passes run 201–218 (AALSIYSALYATMYITST), 230–247 (VLCLGTLCCAFLTGLNRV), and 257–277 (VIGGFILGTAIALFLGLCVVH). Asparagine 316 carries an N-linked (GlcNAc...) asparagine glycan.

Belongs to the PA-phosphatase related phosphoesterase family.

It is found in the cell membrane. The protein localises to the cell projection. The protein resides in the neuron projection. Functionally, may play a role in neurite outgrowth and neurogenesis. This chain is Phospholipid phosphatase-related protein type 1, found in Xenopus tropicalis (Western clawed frog).